The primary structure comprises 233 residues: Antiholin-like protein LrgB (233 aa).

Transmembrane regions (helical) follow at residues 7–27 (INTP…ATFL), 33–53 (GFFL…FLKL), 63–83 (IGGD…AIPL), 97–117 (ILGG…LIAE), 124–144 (GIIA…PVSA), 152–172 (LTSL…SKLI), and 212–232 (ISLV…ATLL).

Belongs to the CidB/LrgB family. LrgB subfamily.

The protein resides in the cell membrane. Inhibits the expression or activity of extracellular murein hydrolases by interacting, possibly with LrgA, with the holin-like proteins CidA and/or CidB. The LrgAB and CidAB proteins may affect the proton motive force of the membrane. May be involved in programmed cell death (PCD), possibly triggering PCD in response to antibiotics and environmental stresses. The sequence is that of Antiholin-like protein LrgB from Staphylococcus saprophyticus subsp. saprophyticus (strain ATCC 15305 / DSM 20229 / NCIMB 8711 / NCTC 7292 / S-41).